A 242-amino-acid chain; its full sequence is Leucyl/phenylalanyl-tRNA--protein transferase (242 aa).

Belongs to the L/F-transferase family.

It localises to the cytoplasm. It carries out the reaction N-terminal L-lysyl-[protein] + L-leucyl-tRNA(Leu) = N-terminal L-leucyl-L-lysyl-[protein] + tRNA(Leu) + H(+). It catalyses the reaction N-terminal L-arginyl-[protein] + L-leucyl-tRNA(Leu) = N-terminal L-leucyl-L-arginyl-[protein] + tRNA(Leu) + H(+). The catalysed reaction is L-phenylalanyl-tRNA(Phe) + an N-terminal L-alpha-aminoacyl-[protein] = an N-terminal L-phenylalanyl-L-alpha-aminoacyl-[protein] + tRNA(Phe). Its function is as follows. Functions in the N-end rule pathway of protein degradation where it conjugates Leu, Phe and, less efficiently, Met from aminoacyl-tRNAs to the N-termini of proteins containing an N-terminal arginine or lysine. This chain is Leucyl/phenylalanyl-tRNA--protein transferase, found in Edwardsiella ictaluri (strain 93-146).